A 285-amino-acid chain; its full sequence is CCR4-NOT transcription complex subunit 7 (285 aa).

Residues Asp-40, Glu-42, Asp-161, Asp-230, and Glu-278 each contribute to the a divalent metal cation site.

Belongs to the CAF1 family. As to quaternary structure, component of the CCR4-NOT complex. Mn(2+) serves as cofactor. The cofactor is Mg(2+). It depends on Co(2+) as a cofactor.

It is found in the nucleus. The protein localises to the cytoplasm. The catalysed reaction is Exonucleolytic cleavage of poly(A) to 5'-AMP.. In terms of biological role, has 3'-5' poly(A) exoribonuclease activity for synthetic poly(A) RNA substrate. Catalytic component of the CCR4-NOT complex which is one of the major cellular mRNA deadenylases and is linked to various cellular processes including bulk mRNA degradation, miRNA-mediated repression, translational repression during translational initiation and general transcription regulation. During miRNA-mediated repression the complex also seems to act as translational repressor during translational initiation. Additional complex functions may be a consequence of its influence on mRNA expression. This Xenopus tropicalis (Western clawed frog) protein is CCR4-NOT transcription complex subunit 7 (cnot7).